Consider the following 548-residue polypeptide: Membrane protein insertase YidC (548 aa).

The chain crosses the membrane as a helical span at residues N6–D26. The interval N28–G56 is disordered. The span at P29–T42 shows a compositional bias: low complexity. The next 4 helical transmembrane spans lie at F350–Y370, F424–I444, L458–I478, and P499–V519.

The protein belongs to the OXA1/ALB3/YidC family. Type 1 subfamily. In terms of assembly, interacts with the Sec translocase complex via SecD. Specifically interacts with transmembrane segments of nascent integral membrane proteins during membrane integration.

It localises to the cell inner membrane. Required for the insertion and/or proper folding and/or complex formation of integral membrane proteins into the membrane. Involved in integration of membrane proteins that insert both dependently and independently of the Sec translocase complex, as well as at least some lipoproteins. Aids folding of multispanning membrane proteins. This is Membrane protein insertase YidC from Salmonella agona (strain SL483).